We begin with the raw amino-acid sequence, 663 residues long: MNKQNNYSDDSIQVLEGLEAVRKRPGMYIGSTDKRGLHHLVYEIVDNSVDEVLNGYGNEIDVTINKDGSISIEDNGRGMPTGIHKSGKPTVEVIFTVLHAGGKFGQGGYKTSGGLHGVGASVVNALSEWLEVEIHRDGSIYHQSFKNGGSPSSGLVKKGKTKKTGTKVTFKPDDTIFKASTSFNFDVLSERLQESAFLLKNLKITLNDLRSGKERQEHYHYEEGIKEFVSYVNEGKEVLHDVATFSGEANGIEVDVAFQYNDQYSESILSFVNNVRTKDGGTHEVGFKTAMTRVFNDYARRINELKTKDKNLDGNDIREGLTAVVSVRIPEELLQFEGQTKSKLGTSEARSAVDSVVADKLPFYLEEKGQLSKSLVKKAIKAQQAREAARKAREDARSGKKNKRKDTLLSGKLTPAQSKNTEKNELYLVEGDSAGGSAKLGRDRKFQAILPLRGKVINTEKARLEDIFKNEEINTIIHTIGAGVGTDFKIEDSNYNRVIIMTDADTDGAHIQVLLLTFFFKYMKPLVQAGRVFIALPPLYKLEKGKGKTKRVEYAWTDEELNKLQKELGKGFTLQRYKGLGEMNPEQLWETTMNPETRTLIRVQVEDEVRSSKRVTTLMGDKVQPRREWIEKHVEFGMQEDQSILDNSEVQVLENDQFDEEEI.

Residues Y7, N47, D74, G114–A120, and K341 contribute to the ATP site. Residues R386–A416 form a disordered region. Residues E387–S398 show a composition bias toward basic and acidic residues. In terms of domain architecture, Toprim spans N424–P538. Residues E430, D503, and D505 each contribute to the Mg(2+) site.

It belongs to the type II topoisomerase family. ParE type 2 subfamily. In terms of assembly, heterotetramer composed of ParC and ParE. Mg(2+) serves as cofactor. Mn(2+) is required as a cofactor. Requires Ca(2+) as cofactor.

The enzyme catalyses ATP-dependent breakage, passage and rejoining of double-stranded DNA.. In terms of biological role, topoisomerase IV is essential for chromosome segregation. It relaxes supercoiled DNA. Performs the decatenation events required during the replication of a circular DNA molecule. This is DNA topoisomerase 4 subunit B from Staphylococcus aureus (strain Mu50 / ATCC 700699).